A 289-amino-acid chain; its full sequence is Glycine-rich RNA-binding protein 5, mitochondrial (289 aa).

A mitochondrion-targeting transit peptide spans 1–31; the sequence is MAFLSKVGRLFSQTSSHVTASSSMLQSIRCM. The 78-residue stretch at 34 to 111 folds into the RRM domain; sequence SKIFVGGISY…RRIRVNYATE (78 aa). A disordered region spans residues 219–289; sequence QGSSTNAGFD…TDDGDVAKRA (71 aa). Residues 257-272 are compositionally biased toward polar residues; that stretch reads GSDNQFGDAENGNTEN.

Belongs to the GR-RBP family. Homodimer. Interacts with MORF8/RIP1 AND RBG3/ORRM3. Binds to RBG2/ORRM5.

It localises to the mitochondrion. Functionally, possibly has a role in RNA transcription or processing during stress. Binds RNAs and DNAs sequence with a preference to single-stranded nucleic acids. Displays strong affinity to poly(U) sequence. Involved in C-to-U editing of mitochondrial RNA. Functions as a major mitochondrial editing factor. Controls 44 percent of the mitochondrial editing sites. This is Glycine-rich RNA-binding protein 5, mitochondrial from Arabidopsis thaliana (Mouse-ear cress).